The chain runs to 96 residues: MVEFSHTKKIGSAGRFGARYGRKVRVRVRDVEIKQKKAYKCPVCGFMKLKRISTSIWECKKCGAKMAGGAYTPETGAGKVVAKAIRRVIESKTKEI.

The C4-type zinc-finger motif lies at 41 to 62 (CPVCGFMKLKRISTSIWECKKC).

The protein belongs to the eukaryotic ribosomal protein eL43 family. It depends on Zn(2+) as a cofactor.

This is Large ribosomal subunit protein eL43 from Methanococcus aeolicus (strain ATCC BAA-1280 / DSM 17508 / OCM 812 / Nankai-3).